The sequence spans 163 residues: 6,7-dimethyl-8-ribityllumazine synthase (163 aa).

5-amino-6-(D-ribitylamino)uracil is bound by residues F27, 58–60 (ALE), and 87–89 (CVV). Position 92-93 (92-93 (DT)) interacts with (2S)-2-hydroxy-3-oxobutyl phosphate. Residue H95 is the Proton donor of the active site. N120 is a binding site for 5-amino-6-(D-ribitylamino)uracil. R134 lines the (2S)-2-hydroxy-3-oxobutyl phosphate pocket.

It belongs to the DMRL synthase family.

It catalyses the reaction (2S)-2-hydroxy-3-oxobutyl phosphate + 5-amino-6-(D-ribitylamino)uracil = 6,7-dimethyl-8-(1-D-ribityl)lumazine + phosphate + 2 H2O + H(+). It participates in cofactor biosynthesis; riboflavin biosynthesis; riboflavin from 2-hydroxy-3-oxobutyl phosphate and 5-amino-6-(D-ribitylamino)uracil: step 1/2. Its function is as follows. Catalyzes the formation of 6,7-dimethyl-8-ribityllumazine by condensation of 5-amino-6-(D-ribitylamino)uracil with 3,4-dihydroxy-2-butanone 4-phosphate. This is the penultimate step in the biosynthesis of riboflavin. The chain is 6,7-dimethyl-8-ribityllumazine synthase from Rhodopseudomonas palustris (strain BisA53).